A 784-amino-acid polypeptide reads, in one-letter code: MMKNLNGRAHNVCYQPYYQQQLQHQQLHQQQHQQQQQQQQQQQHLQQQQLQLQLPYAAQYNQLQQQQLQYNQQQYYQQQLQQQQQQQQQQQLLRQQQPTQSAYQQQNAKQSYGHNNNNNSNNNANMARSNMHATTVAAVNANGNSHANAANANTATAAMAAMCQMQSFLSQQQQQQRQQQQQQQQQYSNNSAHINYNQQQQQSQQQQQSQQQQQSQQQQQSQQQQQQHLPTVATTNGDKLTLDSANEIANFLANELFMQQLVTFDGMQSAPTLTTPTLTPTTLRTIEDTIYELTTDSHVPFQAGFKPPPLTSLGNITNNNTITSTTAGGATLPGINANLINTNPQFDLIALNCAGSVPGSDTEESNGSWNEGQLNDDQSTTDTSSAATDSTSYQNGGHMMGNGSNGGVNNFAAALSGVNTSGRGSGLAANSTTSNSATPARRGGGRRPNKAANMSPEEEEKRRIRRERNKLAAARCRKRRVDQTNELTEEVDALMKKSEDLKKEIESLTATKSQLEYVLQTHSSTCQKVRDDLLTVATCNGLIGPTTLLNACNTSSVSLHNSNNSNNNSNSNDSSNGTITGFDATLNSTGRSNSPLDLKPVLIDEQLLQHIKHEPQDGAIDSGSSLDQDGPTPAKRFALPNIATFNASLQTPTGPAAGAALNTPISSTAPSSFAHFSSAISSPTLNAHALNKLPKPRPNTLNVNAQRPFGVAAAAGDGKAPPTQIQGVPIQTPSTGTFNFDSLMDGGTGLTPVSGPLMPTCSSQNKHPLELPTPTSEPSKLVSL.

Low complexity-rich tracts occupy residues 97–106, 115–126, and 198–227; these read QPTQSAYQQQ, NNNNNSNNNANM, and QQQQ…QQQQ. Disordered regions lie at residues 97–126, 196–231, 358–404, and 421–464; these read QPTQ…NANM, YNQQ…HLPT, PGSD…GNGS, and SGRG…KRRI. Residues 365–378 show a composition bias toward polar residues; it reads SNGSWNEGQLNDDQ. Positions 380 to 397 are enriched in low complexity; the sequence is TTDTSSAATDSTSYQNGG. Residues 421-438 show a composition bias toward polar residues; it reads SGRGSGLAANSTTSNSAT. A bZIP domain is found at 459–522; that stretch reads EEKRRIRRER…SQLEYVLQTH (64 aa). The basic motif stretch occupies residues 461-463; sequence KRR. The tract at residues 464–471 is leucine-zipper; that stretch reads IRRERNKL. At S594 the chain carries Phosphoserine. Disordered regions lie at residues 616–635 and 759–784; these read QDGA…TPAK and PTCS…LVSL.

The protein belongs to the bZIP family. Fos subfamily. In terms of assembly, homodimer. Heterodimer with Jra. The kay-Jra heterodimer binds more stably to the AP-1 site than either of the two proteins alone.

The protein resides in the nucleus. Developmentally regulated transcription factor AP-1 binds and recognizes the enhancer DNA sequence: 5'-TGA[CG]TCA-3'. May play a role in the function or determination of a particular subset of cells in the developing embryo. It is able to carry out its function either independently of or in conjunction with Jra. The sequence is that of Transcription factor kayak from Drosophila mojavensis (Fruit fly).